Reading from the N-terminus, the 247-residue chain is 5'-nucleotidase SurE (247 aa).

The a divalent metal cation site is built by Asp8, Asp9, Ser39, and Asn91.

Belongs to the SurE nucleotidase family. Requires a divalent metal cation as cofactor.

It localises to the cytoplasm. The enzyme catalyses a ribonucleoside 5'-phosphate + H2O = a ribonucleoside + phosphate. Its function is as follows. Nucleotidase that shows phosphatase activity on nucleoside 5'-monophosphates. The chain is 5'-nucleotidase SurE from Pelobacter propionicus (strain DSM 2379 / NBRC 103807 / OttBd1).